Reading from the N-terminus, the 566-residue chain is Amidophosphoribosyltransferase 1, chloroplastic (566 aa).

Residues 1 to 13 are compositionally biased toward low complexity; sequence MAATTSFSSSLSL. 2 disordered regions span residues 1–28 and 58–87; these read MAAT…QPLP and VSSY…DEKP. A chloroplast-targeting transit peptide spans 1–58; sequence MAATTSFSSSLSLITKPNNSSYTNQPLPLFPKPFLKPPHLSLLPSPLSSPPPSLIHGV. The span at 15–25 shows a compositional bias: polar residues; it reads TKPNNSSYTNQ. The span at 59–68 shows a compositional bias: low complexity; the sequence is SSYFSSPSPS. A compositionally biased stretch (basic and acidic residues) spans 70-87; that stretch reads DNSHTPFDYHNDEDDEKP. The Nucleophile role is filled by cysteine 91. The Glutamine amidotransferase type-2 domain maps to 91 to 311; the sequence is CGVVGIYGDP…PGEVLVVDKD (221 aa). Residues cysteine 327, cysteine 473, cysteine 524, and cysteine 527 each coordinate [4Fe-4S] cluster.

The protein in the C-terminal section; belongs to the purine/pyrimidine phosphoribosyltransferase family. The cofactor is [4Fe-4S] cluster. It depends on Mg(2+) as a cofactor. In terms of tissue distribution, expressed in flowers and roots. Also present in leaves, and, to a lower extent, in cotyledons.

The protein localises to the plastid. It localises to the chloroplast stroma. The enzyme catalyses 5-phospho-beta-D-ribosylamine + L-glutamate + diphosphate = 5-phospho-alpha-D-ribose 1-diphosphate + L-glutamine + H2O. The protein operates within purine metabolism; IMP biosynthesis via de novo pathway; N(1)-(5-phospho-D-ribosyl)glycinamide from 5-phospho-alpha-D-ribose 1-diphosphate: step 1/2. Functionally, catalyzes the first committed step of 'de novo' purine biosynthesis from glutamine. Involved in plastid biogenesis and cell division. The polypeptide is Amidophosphoribosyltransferase 1, chloroplastic (ASE1) (Arabidopsis thaliana (Mouse-ear cress)).